A 450-amino-acid chain; its full sequence is Malate:quinone oxidoreductase (450 aa).

Belongs to the MQO family. It depends on FAD as a cofactor.

It localises to the cell membrane. It catalyses the reaction (S)-malate + a quinone = a quinol + oxaloacetate. It functions in the pathway carbohydrate metabolism; tricarboxylic acid cycle; oxaloacetate from (S)-malate (quinone route): step 1/1. Functionally, catalyzes oxidation of malate to oxaloacetate in the citric acid cycle. Donates electrons to quinones of the electron transfer chain. The sequence is that of Malate:quinone oxidoreductase (mqo) from Helicobacter pylori (strain ATCC 700392 / 26695) (Campylobacter pylori).